A 429-amino-acid polypeptide reads, in one-letter code: Trigger factor (429 aa).

In terms of domain architecture, PPIase FKBP-type spans 161–246 (EDRVTIDFTG…LKKVEERELP (86 aa)).

Belongs to the FKBP-type PPIase family. Tig subfamily. Homodimer and monomer. In vivo most of the ribosomes are in complex with monomeric TF. Uncomplexed TF, however, is in a monomer-dimer equilibrium with approximately two thirds of TF existing in a dimeric state.

Its subcellular location is the cytoplasm. The catalysed reaction is [protein]-peptidylproline (omega=180) = [protein]-peptidylproline (omega=0). Its function is as follows. Involved in protein export. Acts as a chaperone by maintaining the newly synthesized protein in an open conformation. Functions as a peptidyl-prolyl cis-trans isomerase. In Escherichia coli O45:K1 (strain S88 / ExPEC), this protein is Trigger factor.